We begin with the raw amino-acid sequence, 466 residues long: 3-isopropylmalate dehydratase large subunit (466 aa).

Residues C347, C407, and C410 each coordinate [4Fe-4S] cluster.

Belongs to the aconitase/IPM isomerase family. LeuC type 1 subfamily. Heterodimer of LeuC and LeuD. [4Fe-4S] cluster is required as a cofactor.

It carries out the reaction (2R,3S)-3-isopropylmalate = (2S)-2-isopropylmalate. The protein operates within amino-acid biosynthesis; L-leucine biosynthesis; L-leucine from 3-methyl-2-oxobutanoate: step 2/4. Functionally, catalyzes the isomerization between 2-isopropylmalate and 3-isopropylmalate, via the formation of 2-isopropylmaleate. In Buchnera aphidicola subsp. Diuraphis noxia, this protein is 3-isopropylmalate dehydratase large subunit.